A 56-amino-acid chain; its full sequence is Small ribosomal subunit protein uS14 (56 aa).

Zn(2+) contacts are provided by C21, C24, C39, and C42.

It belongs to the universal ribosomal protein uS14 family. In terms of assembly, component of the 40S small ribosomal subunit. Requires Zn(2+) as cofactor.

The protein resides in the cytoplasm. It is found in the cytosol. The protein localises to the rough endoplasmic reticulum. The polypeptide is Small ribosomal subunit protein uS14 (RpS29) (Spodoptera frugiperda (Fall armyworm)).